Reading from the N-terminus, the 156-residue chain is Eosinophil cationic-type ribonuclease 3 (156 aa).

Positions 1–25 (MGPKLLESRLCLLLLLRLVLMLASC) are cleaved as a signal peptide. The active-site Proton acceptor is His38. Asn41 carries N-linked (GlcNAc...) asparagine glycosylation. 4 cysteine pairs are disulfide-bonded: Cys47/Cys106, Cys61/Cys119, Cys79/Cys134, and Cys86/Cys94. 62–66 (KGLNT) serves as a coordination point for substrate. Residues Asn89, Asn96, and Asn107 are each glycosylated (N-linked (GlcNAc...) asparagine). His151 serves as the catalytic Proton donor.

The protein belongs to the pancreatic ribonuclease family.

This Mus musculus (Mouse) protein is Eosinophil cationic-type ribonuclease 3 (Ear3).